A 449-amino-acid polypeptide reads, in one-letter code: Probable mitochondrial chaperone bcs1 (449 aa).

Residues 1–20 (MDNIGAADAATSSGISGLLS) lie on the Mitochondrial intermembrane side of the membrane. Residues 21 to 41 (GNSFLGAGIGLMGFGAGLAIL) form a helical membrane-spanning segment. Over 42–449 (RRGLISGASL…FNVHRKSLSV (408 aa)) the chain is Mitochondrial matrix. An ATP-binding site is contributed by 249–256 (GPPGSGKT).

Belongs to the AAA ATPase family. BCS1 subfamily.

The protein resides in the mitochondrion inner membrane. The enzyme catalyses ATP + H2O = ADP + phosphate + H(+). Chaperone necessary for the incorporation of Rieske iron-sulfur protein rip1 into the mitochondrial respiratory chain complex III. The protein is Probable mitochondrial chaperone bcs1 of Schizosaccharomyces pombe (strain 972 / ATCC 24843) (Fission yeast).